A 346-amino-acid chain; its full sequence is uncharacterized protein (346 aa).

Positions 10–109 are disordered; the sequence is WDFIMTDPSS…SNSNGNNSPV (100 aa). Residues 26-44 show a composition bias toward low complexity; it reads KGSSKNGSPKTSSPKSGSP. Residues 56-67 show a composition bias toward polar residues; it reads NQQLLQNDSINL. Residues 94 to 109 are compositionally biased toward low complexity; that stretch reads KSSVVPSNSNGNNSPV.

This is an uncharacterized protein from Dictyostelium discoideum (Social amoeba).